The following is a 204-amino-acid chain: Holliday junction branch migration complex subunit RuvA (204 aa).

Residues 1 to 64 (MIGRLQGILL…EDAHLLFGFA (64 aa)) form a domain I region. Positions 65–143 (QKTDRTLFRE…GVKQSDFFVE (79 aa)) are domain II. A flexible linker region spans residues 144-155 (STHIPLSPSIES). The tract at residues 156-204 (HSESSSDEAISALIALGYKPVEAEKMVKRVAKPELTSEQVIREALKVAL) is domain III.

It belongs to the RuvA family. In terms of assembly, homotetramer. Forms an RuvA(8)-RuvB(12)-Holliday junction (HJ) complex. HJ DNA is sandwiched between 2 RuvA tetramers; dsDNA enters through RuvA and exits via RuvB. An RuvB hexamer assembles on each DNA strand where it exits the tetramer. Each RuvB hexamer is contacted by two RuvA subunits (via domain III) on 2 adjacent RuvB subunits; this complex drives branch migration. In the full resolvosome a probable DNA-RuvA(4)-RuvB(12)-RuvC(2) complex forms which resolves the HJ.

It is found in the cytoplasm. Its function is as follows. The RuvA-RuvB-RuvC complex processes Holliday junction (HJ) DNA during genetic recombination and DNA repair, while the RuvA-RuvB complex plays an important role in the rescue of blocked DNA replication forks via replication fork reversal (RFR). RuvA specifically binds to HJ cruciform DNA, conferring on it an open structure. The RuvB hexamer acts as an ATP-dependent pump, pulling dsDNA into and through the RuvAB complex. HJ branch migration allows RuvC to scan DNA until it finds its consensus sequence, where it cleaves and resolves the cruciform DNA. This is Holliday junction branch migration complex subunit RuvA from Haemophilus influenzae (strain ATCC 51907 / DSM 11121 / KW20 / Rd).